Here is a 160-residue protein sequence, read N- to C-terminus: MRVSVFAVGRMKAGPERELVERYFDRFSKAGPPLGLEFAGVSEIPESRGQTAELRKAEEAQRIHEALDNGAALILLDERGKALGSEAFADRIGRMRDDGKRQLIVAIGGPDGHDPALRTRADLVLALGELTWPHQIARILIAEQLYRAATILAGHPYHRS.

S-adenosyl-L-methionine contacts are provided by residues Leu76, Gly108, and 127-132; that span reads LGELTW.

It belongs to the RNA methyltransferase RlmH family. As to quaternary structure, homodimer.

The protein resides in the cytoplasm. The catalysed reaction is pseudouridine(1915) in 23S rRNA + S-adenosyl-L-methionine = N(3)-methylpseudouridine(1915) in 23S rRNA + S-adenosyl-L-homocysteine + H(+). Its function is as follows. Specifically methylates the pseudouridine at position 1915 (m3Psi1915) in 23S rRNA. This Brucella anthropi (strain ATCC 49188 / DSM 6882 / CCUG 24695 / JCM 21032 / LMG 3331 / NBRC 15819 / NCTC 12168 / Alc 37) (Ochrobactrum anthropi) protein is Ribosomal RNA large subunit methyltransferase H.